The chain runs to 507 residues: UDP-glycosyltransferase 73D1 (507 aa).

UDP-alpha-D-glucose is bound by residues Ser298, 359–361 (SPQ), 376–384 (HCGWNSTIE), and 398–401 (FAEQ).

The protein belongs to the UDP-glycosyltransferase family.

The chain is UDP-glycosyltransferase 73D1 (UGT73D1) from Arabidopsis thaliana (Mouse-ear cress).